A 132-amino-acid polypeptide reads, in one-letter code: Histone H2B.1 (132 aa).

Positions 1–13 (MSAKASKAPASKA) are enriched in low complexity. A disordered region spans residues 1–39 (MSAKASKAPASKAPAEKKPAAKKTSSSTDPSKKRTKARK). Position 7 is an N6-acetyllysine; alternate (K7). K7 participates in a covalent cross-link: Glycyl lysine isopeptide (Lys-Gly) (interchain with G-Cter in SUMO); alternate. Residue S11 is modified to Phosphoserine. Position 12 is an N6-acetyllysine (K12). Residue K17 is modified to N6-acetyllysine; alternate. K17 is covalently cross-linked (Glycyl lysine isopeptide (Lys-Gly) (interchain with G-Cter in SUMO); alternate). A Glycyl lysine isopeptide (Lys-Gly) (interchain with G-Cter in SUMO) cross-link involves residue K18. K125 is covalently cross-linked (Glycyl lysine isopeptide (Lys-Gly) (interchain with G-Cter in ubiquitin)).

Belongs to the histone H2B family. In terms of assembly, the nucleosome is a histone octamer containing two molecules each of H2A, H2B, H3 and H4 assembled in one H3-H4 heterotetramer and two H2A-H2B heterodimers. The octamer wraps approximately 147 bp of DNA. Monoubiquitinated by the UBC2-BRE1 complex to form H2BK123ub1. H2BK123ub1 gives a specific tag for epigenetic transcriptional activation and is also prerequisite for H3K4me and H3K79me formation. H2BK123ub1 also modulates the formation of double-strand breaks during meiosis and is a prerequisite for DNA-damage checkpoint activation. In terms of processing, phosphorylated by STE20 to form H2BS10ph during progression through meiotic prophase. May be correlated with chromosome condensation. Post-translationally, acetylated by GCN5 to form H2BK11ac and H2BK16ac. H2BK16ac can also be formed by ESA1. Acetylation of N-terminal lysines and particularly formation of H2BK11acK16ac has a positive effect on transcription. Sumoylation to form H2BK6su and probably also H2BK16su or H2BK17su, occurs preferentially near the telomeres and represses gene transcription.

The protein resides in the nucleus. It localises to the chromosome. Functionally, core component of nucleosome. Nucleosomes wrap and compact DNA into chromatin, limiting DNA accessibility to the cellular machineries which require DNA as a template. Histones thereby play a central role in transcription regulation, DNA repair, DNA replication and chromosomal stability. DNA accessibility is regulated via a complex set of post-translational modifications of histones, also called histone code, and nucleosome remodeling. The chain is Histone H2B.1 (HTB1) from Kluyveromyces lactis (strain ATCC 8585 / CBS 2359 / DSM 70799 / NBRC 1267 / NRRL Y-1140 / WM37) (Yeast).